The primary structure comprises 122 residues: Ribosome-binding factor A (122 aa).

It belongs to the RbfA family. As to quaternary structure, monomer. Binds 30S ribosomal subunits, but not 50S ribosomal subunits or 70S ribosomes.

The protein localises to the cytoplasm. One of several proteins that assist in the late maturation steps of the functional core of the 30S ribosomal subunit. Associates with free 30S ribosomal subunits (but not with 30S subunits that are part of 70S ribosomes or polysomes). Required for efficient processing of 16S rRNA. May interact with the 5'-terminal helix region of 16S rRNA. This chain is Ribosome-binding factor A, found in Caldanaerobacter subterraneus subsp. tengcongensis (strain DSM 15242 / JCM 11007 / NBRC 100824 / MB4) (Thermoanaerobacter tengcongensis).